The primary structure comprises 317 residues: Tyrosine--tRNA ligase (317 aa).

Tyrosine 33 is an L-tyrosine binding site. A 'HIGH' region motif is present at residues 38-46 (PSGKIHMGH). The L-tyrosine site is built by tyrosine 155, glutamine 159, aspartate 162, and glutamine 177. The short motif at 211–215 (KMASS) is the 'KMSKS' region element. Serine 214 serves as a coordination point for ATP.

The protein belongs to the class-I aminoacyl-tRNA synthetase family. TyrS type 3 subfamily. In terms of assembly, homodimer.

Its subcellular location is the cytoplasm. It carries out the reaction tRNA(Tyr) + L-tyrosine + ATP = L-tyrosyl-tRNA(Tyr) + AMP + diphosphate + H(+). Its function is as follows. Catalyzes the attachment of tyrosine to tRNA(Tyr) in a two-step reaction: tyrosine is first activated by ATP to form Tyr-AMP and then transferred to the acceptor end of tRNA(Tyr). The protein is Tyrosine--tRNA ligase of Methanosarcina mazei (strain ATCC BAA-159 / DSM 3647 / Goe1 / Go1 / JCM 11833 / OCM 88) (Methanosarcina frisia).